We begin with the raw amino-acid sequence, 193 residues long: Thymidine kinase (193 aa).

Residues 16–23 (GPMFSGKS) and 89–92 (DEIQ) contribute to the ATP site. Residue E90 is the Proton acceptor of the active site. 4 residues coordinate Zn(2+): C146, C149, C184, and C187.

This sequence belongs to the thymidine kinase family. Homotetramer.

The protein localises to the cytoplasm. The catalysed reaction is thymidine + ATP = dTMP + ADP + H(+). This is Thymidine kinase from Caldanaerobacter subterraneus subsp. tengcongensis (strain DSM 15242 / JCM 11007 / NBRC 100824 / MB4) (Thermoanaerobacter tengcongensis).